We begin with the raw amino-acid sequence, 382 residues long: Chaperone protein DnaJ (382 aa).

The 66-residue stretch at 5-70 folds into the J domain; the sequence is DYYEVLGVSR…DKKAAYDRYG (66 aa). The CR-type zinc-finger motif lies at 141 to 219; sequence GVQKTINVPA…CHGAGRVEKE (79 aa). C154, C157, C171, C174, C193, C196, C207, and C210 together coordinate Zn(2+). 4 CXXCXGXG motif repeats span residues 154–161, 171–178, 193–200, and 207–214; these read CDSCKGTG, CPTCSGMG, CPTCNGMG, and CKSCHGAG.

The protein belongs to the DnaJ family. Homodimer. Requires Zn(2+) as cofactor.

It is found in the cytoplasm. Its function is as follows. Participates actively in the response to hyperosmotic and heat shock by preventing the aggregation of stress-denatured proteins and by disaggregating proteins, also in an autonomous, DnaK-independent fashion. Unfolded proteins bind initially to DnaJ; upon interaction with the DnaJ-bound protein, DnaK hydrolyzes its bound ATP, resulting in the formation of a stable complex. GrpE releases ADP from DnaK; ATP binding to DnaK triggers the release of the substrate protein, thus completing the reaction cycle. Several rounds of ATP-dependent interactions between DnaJ, DnaK and GrpE are required for fully efficient folding. Also involved, together with DnaK and GrpE, in the DNA replication of plasmids through activation of initiation proteins. In Cereibacter sphaeroides (strain ATCC 17025 / ATH 2.4.3) (Rhodobacter sphaeroides), this protein is Chaperone protein DnaJ.